The sequence spans 857 residues: Leucine--tRNA ligase (857 aa).

Positions 42–52 (PYPSGRLHMGH) match the 'HIGH' region motif. The short motif at 617–621 (KMSKS) is the 'KMSKS' region element. An ATP-binding site is contributed by Lys-620.

Belongs to the class-I aminoacyl-tRNA synthetase family.

The protein resides in the cytoplasm. It catalyses the reaction tRNA(Leu) + L-leucine + ATP = L-leucyl-tRNA(Leu) + AMP + diphosphate. The sequence is that of Leucine--tRNA ligase from Vibrio parahaemolyticus serotype O3:K6 (strain RIMD 2210633).